We begin with the raw amino-acid sequence, 35 residues long: Non-specific lipid-transfer protein 1 (35 aa).

Residues Cys13 and Cys28 are joined by a disulfide bond.

As to expression, seeds.

Functionally, plant non-specific lipid-transfer proteins transfer phospholipids as well as galactolipids across membranes. May play a role in wax or cutin deposition in the cell walls of expanding epidermal cells and certain secretory tissues. Inhibits the growth of F.oxysporum and P.infestans. The polypeptide is Non-specific lipid-transfer protein 1 (Nigella sativa (Black cumin)).